The chain runs to 511 residues: Histidine ammonia-lyase (511 aa).

A cross-link (5-imidazolinone (Ala-Gly)) is located at residues 142 to 144 (ASG). At Ser-143 the chain carries 2,3-didehydroalanine (Ser).

Belongs to the PAL/histidase family. Post-translationally, contains an active site 4-methylidene-imidazol-5-one (MIO), which is formed autocatalytically by cyclization and dehydration of residues Ala-Ser-Gly.

Its subcellular location is the cytoplasm. The catalysed reaction is L-histidine = trans-urocanate + NH4(+). The protein operates within amino-acid degradation; L-histidine degradation into L-glutamate; N-formimidoyl-L-glutamate from L-histidine: step 1/3. The sequence is that of Histidine ammonia-lyase from Brucella ovis (strain ATCC 25840 / 63/290 / NCTC 10512).